Here is a 125-residue protein sequence, read N- to C-terminus: Bublin coiled-coil protein (125 aa).

Positions 46–95 (IRKLDTQLDHLNDYMSKMEERLKAHNDRMMETLKQQKEEREKRRRSFHER) form a coiled coil. Residues 79–125 (KQQKEEREKRRRSFHERMSQNQSEDEEFKKQMSSILKRVQSVKRTEK) are disordered.

In terms of tissue distribution, expressed in many epithelial tissues, including the pharynx, intestine, excretory canal and hypodermis.

The protein localises to the cell junction. Its subcellular location is the cytoplasm. It localises to the cytoskeleton. In terms of biological role, dynamic component of the endotube in intestinal cells, interacts with intermediate filament and regulates intestinal lumen morphology. The sequence is that of Bublin coiled-coil protein from Caenorhabditis elegans.